Reading from the N-terminus, the 652-residue chain is Acetyl-coenzyme A synthetase (652 aa).

Residues 189–192, Thr311, and Asn335 contribute to the CoA site; that span reads RGGK. ATP-binding positions include 387–389, 411–416, Asp500, and Arg515; these read GEP and DTWWQT. Ser523 contacts CoA. Arg526 provides a ligand contact to ATP. The Mg(2+) site is built by Val537, His539, and Val542. Arg584 contacts CoA. Position 609 is an N6-acetyllysine (Lys609).

Belongs to the ATP-dependent AMP-binding enzyme family. It depends on Mg(2+) as a cofactor. Post-translationally, acetylated. Deacetylation by the SIR2-homolog deacetylase activates the enzyme.

It carries out the reaction acetate + ATP + CoA = acetyl-CoA + AMP + diphosphate. Its function is as follows. Catalyzes the conversion of acetate into acetyl-CoA (AcCoA), an essential intermediate at the junction of anabolic and catabolic pathways. AcsA undergoes a two-step reaction. In the first half reaction, AcsA combines acetate with ATP to form acetyl-adenylate (AcAMP) intermediate. In the second half reaction, it can then transfer the acetyl group from AcAMP to the sulfhydryl group of CoA, forming the product AcCoA. This is Acetyl-coenzyme A synthetase from Rhizobium rhizogenes (strain K84 / ATCC BAA-868) (Agrobacterium radiobacter).